The primary structure comprises 645 residues: MGRIHKLDDQLANKIAAGEVVERPASVVKELVENAIDAHSTAVEIELEEAGMTKIRVIDNGDGMEEEDCLLAFERHATSKIQDEHDLFRIRTLGFRGEALPSIASVSEVELVTSTGSGPGTKLVLKGGALVARERAAGRKGTDITVSNLFFNTPARLKYMKTIHTELGHAADVVNRLALAHPDVSFRLRHHGKTLLATNGSGDVRHVLAAIYGMETAKQMIPIEAESLDFTVRGYISLPEVTRASRNYMSLIVNGRYVRNIPLMKAIEAGYHTLLPIGRYPIVFLAIEMDPVLVDVNVHPAKLEVRFSKEAELNELITATIRQAFRQRTLIPSVSADSKTVKAKAEQASWTFAHRVHEPPAQPDGKAEGTSDVTAAASLASEGSLSPLPAAAQADAPAVSEEAEASVFSERRTGVVNDLPAAELKRDAEVEEEPTEACLPADEQAEEKRAVDRLPPLYPIGQLHGTYILAENEHGLYMIDQHAAQERINYEYFREKLGEVTNEVQELLVPLTFEYPADEYERIAACRDELARCGVFLEPFGPRAFLVRSHPVWFPKGKEKEIIEEMIEHVLTAKTVDIKQLREQAAIVMSCKRAIKANQHLRTDEIFALLETLRQTTDPFTCPHGRPIIVHFSTYEIEKLFKRVM.

This sequence belongs to the DNA mismatch repair MutL/HexB family.

In terms of biological role, this protein is involved in the repair of mismatches in DNA. It is required for dam-dependent methyl-directed DNA mismatch repair. May act as a 'molecular matchmaker', a protein that promotes the formation of a stable complex between two or more DNA-binding proteins in an ATP-dependent manner without itself being part of a final effector complex. This chain is DNA mismatch repair protein MutL, found in Geobacillus thermodenitrificans (strain NG80-2).